Reading from the N-terminus, the 313-residue chain is Ankyrin repeat family A protein 2 (313 aa).

5 ANK repeats span residues 148–180, 181–213, 214–246, 247–279, and 280–313; these read ANSLSVHQLAAQGEMLYLATRIEQENVINHTDE, EGFTPLMWAAAHGQIAVVEFLLQNGADPQLLGK, GRESALSLACSKGYTDIVKMLLDCGVDVNEYDW, NGGTPLLYAVHGNHVKCVKMLLENGADPTIETD, and SGYNSMDLAVALGYRSVQQVIESHLLKLLQNIKE.

As to quaternary structure, interacts (via ANK repeats) with CCDC8 (via PxLPxI/L motif); mediates the interaction with the 3M complex which is composed of CCDC8, CUL7 and OBSL1. Interacts (via ANK repeats) with HDAC4 (via PxLPxI/L motif). Interacts (via ANK repeats) with HDAC5 (via PxLPxI/L motif). Interacts (via ANK repeats) with LRP2/megalin (via PxLPxI/L motif). Interacts (via ANK repeats) with RFX7 (via PxLPxI/L motif). Interacts with AHRR. Interacts with NEK6.

It localises to the cytoplasm. It is found in the cytoskeleton. The protein localises to the membrane. In terms of biological role, may regulate the interaction between the 3M complex and the histone deacetylases HDAC4 and HDAC5. May also regulate LRP2/megalin. The polypeptide is Ankyrin repeat family A protein 2 (ANKRA2) (Bos taurus (Bovine)).